A 147-amino-acid chain; its full sequence is Large ribosomal subunit protein bL9 (147 aa).

The protein belongs to the bacterial ribosomal protein bL9 family.

Functionally, binds to the 23S rRNA. The sequence is that of Large ribosomal subunit protein bL9 from Gemmatimonas aurantiaca (strain DSM 14586 / JCM 11422 / NBRC 100505 / T-27).